The sequence spans 66 residues: MPKLKTKSSAKKRFKITASGKVVAAQSTKRHGMTKRSKRSLRTRRGTALMSAADTRIVAPFMPYGL.

The interval 19–45 is disordered; the sequence is SGKVVAAQSTKRHGMTKRSKRSLRTRR. Residues 28-45 show a composition bias toward basic residues; the sequence is TKRHGMTKRSKRSLRTRR.

It belongs to the bacterial ribosomal protein bL35 family.

The protein is Large ribosomal subunit protein bL35 of Anaplasma phagocytophilum (strain HZ).